The primary structure comprises 284 residues: 2-dehydro-3-deoxyphosphooctonate aldolase (284 aa).

This sequence belongs to the KdsA family.

It is found in the cytoplasm. It catalyses the reaction D-arabinose 5-phosphate + phosphoenolpyruvate + H2O = 3-deoxy-alpha-D-manno-2-octulosonate-8-phosphate + phosphate. It functions in the pathway carbohydrate biosynthesis; 3-deoxy-D-manno-octulosonate biosynthesis; 3-deoxy-D-manno-octulosonate from D-ribulose 5-phosphate: step 2/3. The protein operates within bacterial outer membrane biogenesis; lipopolysaccharide biosynthesis. The protein is 2-dehydro-3-deoxyphosphooctonate aldolase of Serratia proteamaculans (strain 568).